A 252-amino-acid polypeptide reads, in one-letter code: Type II secretion system protein N (252 aa).

The Cytoplasmic portion of the chain corresponds to 1–4; that stretch reads MKRA. A helical membrane pass occupies residues 5–25; that stretch reads VGYGLLFSTVLMTSVVVHLPA. Residues 26–252 lie on the Periplasmic side of the membrane; that stretch reads QVALSPLPLP…RYPFNQQGQL (227 aa).

The protein belongs to the GSP N family.

It localises to the cell inner membrane. Its function is as follows. Involved in a type II secretion system (T2SS, formerly general secretion pathway, GSP) for the export of proteins. Required for secretion of cholera toxin through the outer membrane. The chain is Type II secretion system protein N (epsN) from Vibrio cholerae serotype O1 (strain ATCC 39315 / El Tor Inaba N16961).